We begin with the raw amino-acid sequence, 312 residues long: DNA-directed RNA polymerase subunit alpha (312 aa).

The alpha N-terminal domain (alpha-NTD) stretch occupies residues 1 to 226 (MIEFKKPNIT…EHFKAFESAD (226 aa)). The segment at 243-312 (KEKKLEMTIE…DLGLSLRQED (70 aa)) is alpha C-terminal domain (alpha-CTD).

The protein belongs to the RNA polymerase alpha chain family. In terms of assembly, homodimer. The RNAP catalytic core consists of 2 alpha, 1 beta, 1 beta' and 1 omega subunit. When a sigma factor is associated with the core the holoenzyme is formed, which can initiate transcription.

The enzyme catalyses RNA(n) + a ribonucleoside 5'-triphosphate = RNA(n+1) + diphosphate. DNA-dependent RNA polymerase catalyzes the transcription of DNA into RNA using the four ribonucleoside triphosphates as substrates. In Lactobacillus delbrueckii subsp. bulgaricus (strain ATCC 11842 / DSM 20081 / BCRC 10696 / JCM 1002 / NBRC 13953 / NCIMB 11778 / NCTC 12712 / WDCM 00102 / Lb 14), this protein is DNA-directed RNA polymerase subunit alpha.